Here is a 177-residue protein sequence, read N- to C-terminus: MRKIWELKKKEAQKEKNASGISPAQIRIQKDVTDLEIPSTMSTSWPDPIKLNVLHLEIRPDEGYYKGGKFKFRIQIDDNYPHDPPKVKCLNKIYHPNIDIEGNVCLNILRQDWNPVLNLNSILVGLQFLFLSPNAEDPLNKEAAADLHKDPQGFASRVRTAMKGGLVNGISFDNVMA.

The region spanning 23–167 (PAQIRIQKDV…VRTAMKGGLV (145 aa)) is the UBC core domain. Residue C105 is the Glycyl thioester intermediate of the active site.

It belongs to the ubiquitin-conjugating enzyme family. UBC12 subfamily.

It carries out the reaction [E1 NEDD8-activating enzyme]-S-[NEDD8 protein]-yl-L-cysteine + [E2 NEDD8-conjugating enzyme]-L-cysteine = [E1 NEDD8-activating enzyme]-L-cysteine + [E2 NEDD8-conjugating enzyme]-S-[NEDD8-protein]-yl-L-cysteine.. Its pathway is protein modification; protein neddylation. Accepts the ubiquitin-like protein NEDD8/RUB1 from the UBA3-ULA1 E1 complex and catalyzes its covalent attachment to other proteins. The polypeptide is NEDD8-conjugating enzyme ubc12 (ubc12) (Schizosaccharomyces pombe (strain 972 / ATCC 24843) (Fission yeast)).